The primary structure comprises 409 residues: Endoglucanase B (409 aa).

The first 21 residues, 1 to 21 (MKLKRIAALLTAAVMSVGVMA), serve as a signal peptide directing secretion. The segment at 23–66 (CGGSKSDDKSKADTKSAAETSGAEGDSSESEEIPVSQTHTNDPM) is disordered. Basic and acidic residues predominate over residues 27–38 (KSDDKSKADTKS). Over residues 57 to 66 (VSQTHTNDPM) the composition is skewed to polar residues. The active-site Proton donor is the Glu212. Glu332 serves as the catalytic Nucleophile.

This sequence belongs to the glycosyl hydrolase 5 (cellulase A) family.

It carries out the reaction Endohydrolysis of (1-&gt;4)-beta-D-glucosidic linkages in cellulose, lichenin and cereal beta-D-glucans.. This is Endoglucanase B (celB) from Ruminococcus albus.